A 1009-amino-acid chain; its full sequence is MICAL-like protein 2 (1009 aa).

Residues 1–107 (MAAIKALQEW…YVSQYYNYFH (107 aa)) enclose the Calponin-homology (CH) domain. Residues 1 to 260 (MAAIKALQEW…KSSNLASRKP (260 aa)) are forms an intramolecular interaction with the C-terminal coiled coil domain keeping the protein in a closed conformation. A phosphoserine mark is found at Ser-110, Ser-143, and Ser-153. Disordered regions lie at residues 114-180 (GMAG…PGTA), 247-268 (SVSP…ADTR), 348-447 (NSSP…TSKV), and 655-834 (SPSI…TSPV). Residues 144 to 171 (PAQTQRSPLSPARTNPVVQRNEGGSQRP) are compositionally biased toward polar residues. An LIM zinc-binding domain is found at 186-248 (SICGVCGKHV…THHSSEVTSV (63 aa)). The residue at position 249 (Ser-249) is a Phosphoserine. The necessary and sufficient for interaction with actinins stretch occupies residues 261 to 393 (GGVTADTRPF…QGQTASKGVK (133 aa)). The mediates targeting to the cell plasma membrane stretch occupies residues 261 to 805 (GGVTADTRPF…EDGTRSCKEE (545 aa)). The segment covering 348–419 (NSSPIGWSSP…AWTSSASKTQ (72 aa)) has biased composition (polar residues). Over residues 430–442 (PSAPAPASAPAPA) the composition is skewed to pro residues. Residues 694–730 (EGWRARLKPVDKKTPAGRSLEQKEPVLAEPRIGDTSR) show a composition bias toward basic and acidic residues. 2 stretches are compositionally biased toward low complexity: residues 731 to 746 (KASS…TLTS) and 755 to 769 (PAGS…SPSP). Phosphoserine is present on residues Ser-766 and Ser-768. Basic and acidic residues predominate over residues 791-817 (EPKKQEDGTRSCKEEKSPTRWSRERSA). The tract at residues 806–913 (KSPTRWSRER…LMYKSKDQRL (108 aa)) is forms an intramolecular interaction with the N-terminal Calponin-homology and LIM zinc-binding domains-containing region keeping the protein in a closed conformation. Ser-832 carries the phosphoserine modification. Positions 833–980 (PVRLHPDYIP…EQEEDQMLEN (148 aa)) constitute a bMERB domain. A coiled-coil region spans residues 841 to 880 (IPQEELQRQLQDIESQLDALELRGVELEKRLRAAEGDASE). The interval 913–1009 (LEEQQLDLQG…WSSKSKSGQA (97 aa)) is mediates interaction with RAB13 and is required for transition from the closed to the open conformation.

Interacts with RAB13 (GTP-bound form); competes with RAB8A and is involved in tight junctions assembly. Interacts with RAB8A; competes with RAB13 and is involved in E-cadherin endocytic recycling. Interacts with RAB8B. Interacts (preferentially in opened conformation) with ACTN1 and ACTN4; stimulated by RAB13 activation. Interacts (via calponin-homology (CH) domain) with the filamins FLNA, FLNB and FLNC (via actin-binding domain). In terms of tissue distribution, detected in brain, lung, liver and kidney (at protein level).

The protein resides in the cell membrane. It localises to the cell junction. Its subcellular location is the tight junction. It is found in the recycling endosome. The protein localises to the cell projection. The protein resides in the neuron projection. It localises to the cytoplasm. Its subcellular location is the cytoskeleton. Functionally, effector of small Rab GTPases RAB8A and RAB13 which is involved in junctional complexes assembly through the regulation of cell adhesion molecules transport to the plasma membrane and actin cytoskeleton reorganization. Regulates the endocytic recycling of occludins, claudins and E-cadherin to the plasma membrane and may thereby regulate the establishment of tight junctions and adherens junctions. In parallel, may regulate actin cytoskeleton reorganization directly through interaction with F-actin or indirectly through actinins and filamins. Undergoes liquid-liquid phase separation to form tubular recycling endosomes. Plays 2 sequential roles in the biogenesis of tubular recycling endosomes: first organizes phase separation and then the closed form formed by interaction with RAB8A promotes endosomal tubulation. The protein is MICAL-like protein 2 (Micall2) of Mus musculus (Mouse).